A 433-amino-acid chain; its full sequence is Enolase (433 aa).

Residue Q167 coordinates (2R)-2-phosphoglycerate. The Proton donor role is filled by E209. The Mg(2+) site is built by D246, E291, and D318. Residues K343, R372, S373, and K394 each contribute to the (2R)-2-phosphoglycerate site. K343 functions as the Proton acceptor in the catalytic mechanism.

It belongs to the enolase family. Component of the RNA degradosome, a multiprotein complex involved in RNA processing and mRNA degradation. Mg(2+) serves as cofactor.

The protein localises to the cytoplasm. It localises to the secreted. The protein resides in the cell surface. It carries out the reaction (2R)-2-phosphoglycerate = phosphoenolpyruvate + H2O. It functions in the pathway carbohydrate degradation; glycolysis; pyruvate from D-glyceraldehyde 3-phosphate: step 4/5. Catalyzes the reversible conversion of 2-phosphoglycerate (2-PG) into phosphoenolpyruvate (PEP). It is essential for the degradation of carbohydrates via glycolysis. In Shewanella frigidimarina (strain NCIMB 400), this protein is Enolase.